Consider the following 199-residue polypeptide: Recombination protein RecR (199 aa).

The segment at 57–72 (CSVCGNITEQDPCAIC) adopts a C4-type zinc-finger fold. Residues 80-176 (STIMVVEEAK…KVTRLAAGLA (97 aa)) enclose the Toprim domain.

The protein belongs to the RecR family.

In terms of biological role, may play a role in DNA repair. It seems to be involved in an RecBC-independent recombinational process of DNA repair. It may act with RecF and RecO. This is Recombination protein RecR from Lactobacillus delbrueckii subsp. bulgaricus (strain ATCC BAA-365 / Lb-18).